Reading from the N-terminus, the 55-residue chain is Glycine-rich antimicrobial peptide Pg-AMP (55 aa).

Residues 18-39 show a composition bias toward gly residues; that stretch reads GYGGYGGGRYGGGYGSGRGQPV. A disordered region spans residues 18-55; it reads GYGGYGGGRYGGGYGSGRGQPVGQGVERSHDDNRNQPR. A compositionally biased stretch (basic and acidic residues) spans 44–55; that stretch reads ERSHDDNRNQPR.

Monomer and homodimer. Might act by homodimer formation.

Functionally, has antibacterial activity against the Gram-negative bacteria Klebsiella sp., Proteus sp., E.coli ATCC 8739 (MIC=72 ug/ml) and K.pneumoniae (MIC=32 ug/ml). Has no activity against the Gram-negative bacterium S.typhimurium or the Gram-positive bacterium S.aureus. Does not have antifungal activity against the human and plant pathogenic fungi F.oxysporum, A.fumigatus and R.solani. In Psidium guajava (Guava), this protein is Glycine-rich antimicrobial peptide Pg-AMP.